The sequence spans 105 residues: Large ribosomal subunit protein uL24 (105 aa).

Belongs to the universal ribosomal protein uL24 family. Part of the 50S ribosomal subunit.

One of two assembly initiator proteins, it binds directly to the 5'-end of the 23S rRNA, where it nucleates assembly of the 50S subunit. Functionally, one of the proteins that surrounds the polypeptide exit tunnel on the outside of the subunit. The protein is Large ribosomal subunit protein uL24 of Clostridium botulinum (strain Langeland / NCTC 10281 / Type F).